Here is a 131-residue protein sequence, read N- to C-terminus: Small ribosomal subunit protein uS9 (131 aa).

Belongs to the universal ribosomal protein uS9 family.

In Glaesserella parasuis serovar 5 (strain SH0165) (Haemophilus parasuis), this protein is Small ribosomal subunit protein uS9.